The following is a 183-amino-acid chain: NADH-quinone oxidoreductase subunit B 2 (183 aa).

The [4Fe-4S] cluster site is built by Cys-47, Cys-48, Cys-113, and Cys-142.

It belongs to the complex I 20 kDa subunit family. In terms of assembly, NDH-1 is composed of 14 different subunits. Subunits NuoB, C, D, E, F, and G constitute the peripheral sector of the complex. [4Fe-4S] cluster is required as a cofactor.

It is found in the cell inner membrane. The catalysed reaction is a quinone + NADH + 5 H(+)(in) = a quinol + NAD(+) + 4 H(+)(out). In terms of biological role, NDH-1 shuttles electrons from NADH, via FMN and iron-sulfur (Fe-S) centers, to quinones in the respiratory chain. The immediate electron acceptor for the enzyme in this species is believed to be ubiquinone. Couples the redox reaction to proton translocation (for every two electrons transferred, four hydrogen ions are translocated across the cytoplasmic membrane), and thus conserves the redox energy in a proton gradient. In Anaeromyxobacter sp. (strain Fw109-5), this protein is NADH-quinone oxidoreductase subunit B 2.